The sequence spans 363 residues: Neutral protease 2 homolog NFIA_102630 (363 aa).

Positions Met-1–Ala-19 are cleaved as a signal peptide. A propeptide spanning residues Leu-20–Arg-172 is cleaved from the precursor. Intrachain disulfides connect Cys-178/Cys-250 and Cys-257/Cys-275. Residue His-300 coordinates Zn(2+). Residue Glu-301 is part of the active site. Zn(2+)-binding residues include His-304 and Asp-315.

It belongs to the peptidase M35 family. Zn(2+) is required as a cofactor.

It is found in the secreted. It catalyses the reaction Preferential cleavage of bonds with hydrophobic residues in P1'. Also 3-Asn-|-Gln-4 and 8-Gly-|-Ser-9 bonds in insulin B chain.. In terms of biological role, secreted metalloproteinase that allows assimilation of proteinaceous substrates. Shows high activities on basic nuclear substrates such as histone and protamine. The protein is Neutral protease 2 homolog NFIA_102630 of Neosartorya fischeri (strain ATCC 1020 / DSM 3700 / CBS 544.65 / FGSC A1164 / JCM 1740 / NRRL 181 / WB 181) (Aspergillus fischerianus).